Consider the following 437-residue polypeptide: GTPase Der (437 aa).

2 consecutive EngA-type G domains span residues Pro3–Glu168 and Thr178–Ser353. GTP contacts are provided by residues Gly9 to Ser16, Asp56 to Tyr60, Asn120 to Glu123, Gly184 to Ser191, Asp231 to Leu235, and Asn296 to Asp299. The KH-like domain occupies Arg354–Lys437.

This sequence belongs to the TRAFAC class TrmE-Era-EngA-EngB-Septin-like GTPase superfamily. EngA (Der) GTPase family. In terms of assembly, associates with the 50S ribosomal subunit.

GTPase that plays an essential role in the late steps of ribosome biogenesis. In Chlorobium phaeobacteroides (strain DSM 266 / SMG 266 / 2430), this protein is GTPase Der.